The primary structure comprises 393 residues: 26S proteasome regulatory subunit RPN9 (393 aa).

One can recognise a PCI domain in the interval 187–355 (SFYYTSLLYL…ELVTISWVQP (169 aa)).

The protein belongs to the proteasome subunit S11 family.

Its function is as follows. Acts as a regulatory subunit of the 26S proteasome which is involved in the ATP-dependent degradation of ubiquitinated proteins. This Saccharomyces cerevisiae (strain ATCC 204508 / S288c) (Baker's yeast) protein is 26S proteasome regulatory subunit RPN9 (RPN9).